Consider the following 450-residue polypeptide: Phosphoglucosamine mutase (450 aa).

Serine 102 (phosphoserine intermediate) is an active-site residue. Positions 102, 243, 245, and 247 each coordinate Mg(2+). A Phosphoserine modification is found at serine 102.

This sequence belongs to the phosphohexose mutase family. Mg(2+) serves as cofactor. In terms of processing, activated by phosphorylation.

The catalysed reaction is alpha-D-glucosamine 1-phosphate = D-glucosamine 6-phosphate. Its function is as follows. Catalyzes the conversion of glucosamine-6-phosphate to glucosamine-1-phosphate. The sequence is that of Phosphoglucosamine mutase from Rhizobium meliloti (strain 1021) (Ensifer meliloti).